Reading from the N-terminus, the 210-residue chain is Silenced mating-type protein ALPHA2 (210 aa).

At M1 the chain carries N-acetylmethionine. Residues 1 to 102 (MNKIPIKDLL…RSIENDRSNY (102 aa)) are N-terminal domain. Residues 103–128 (QLTQKNKSADGLVFNVVTQDMINKST) are flexible linker. The homeobox; TALE-type DNA-binding region spans 129-191 (KPYRGHRFTK…NRRRKEKTIT (63 aa)). The interval 190–210 (ITIAPELADLLSGEPLAKKKE) is C-terminal tail.

It belongs to the TALE/M-ATYP homeobox family.

It is found in the nucleus. In terms of biological role, mating type proteins are sequence specific DNA-binding proteins that act as master switches in yeast differentiation by controlling gene expression in a cell type-specific fashion. Silenced copy of ALPHA2 at HML. In Saccharomyces cerevisiae (strain ATCC 204508 / S288c) (Baker's yeast), this protein is Silenced mating-type protein ALPHA2 (HMLALPHA2).